The sequence spans 247 residues: Carboxy-S-adenosyl-L-methionine synthase (247 aa).

S-adenosyl-L-methionine is bound by residues Y39, 64 to 66 (GCS), 89 to 90 (DN), 117 to 118 (DI), N132, and R199.

The protein belongs to the class I-like SAM-binding methyltransferase superfamily. Cx-SAM synthase family. In terms of assembly, homodimer.

It catalyses the reaction prephenate + S-adenosyl-L-methionine = carboxy-S-adenosyl-L-methionine + 3-phenylpyruvate + H2O. Functionally, catalyzes the conversion of S-adenosyl-L-methionine (SAM) to carboxy-S-adenosyl-L-methionine (Cx-SAM). The protein is Carboxy-S-adenosyl-L-methionine synthase of Cronobacter sakazakii (strain ATCC BAA-894) (Enterobacter sakazakii).